Consider the following 402-residue polypeptide: Tryptophan synthase beta chain (402 aa).

N6-(pyridoxal phosphate)lysine is present on lysine 91.

The protein belongs to the TrpB family. As to quaternary structure, tetramer of two alpha and two beta chains. Requires pyridoxal 5'-phosphate as cofactor.

The catalysed reaction is (1S,2R)-1-C-(indol-3-yl)glycerol 3-phosphate + L-serine = D-glyceraldehyde 3-phosphate + L-tryptophan + H2O. Its pathway is amino-acid biosynthesis; L-tryptophan biosynthesis; L-tryptophan from chorismate: step 5/5. In terms of biological role, the beta subunit is responsible for the synthesis of L-tryptophan from indole and L-serine. This chain is Tryptophan synthase beta chain, found in Streptococcus thermophilus (strain ATCC BAA-491 / LMD-9).